Consider the following 93-residue polypeptide: Em protein (93 aa).

Residues 1–93 (MASGQQERSQ…IDESKFKTKS (93 aa)) form a disordered region. 3 stretches are compositionally biased toward basic and acidic residues: residues 9–19 (SQLDRKAREGE), 38–52 (AEGRSRGGQTRREQM), and 73–93 (GGDRAAREGIDIDESKFKTKS).

The protein belongs to the small hydrophilic plant seed protein family.

In terms of biological role, it is thought to provide protection for the cytoplasm during the desiccation stage of embryo development. The polypeptide is Em protein (EM) (Triticum aestivum (Wheat)).